Consider the following 271-residue polypeptide: tRNA (guanine-N(7)-)-methyltransferase (271 aa).

S-adenosyl-L-methionine-binding residues include Glu-95, Glu-120, Asp-147, and Asp-175. Asp-175 is a catalytic residue. Residues Lys-179, Asp-211, and 249–252 each bind substrate; that span reads THFE.

The protein belongs to the class I-like SAM-binding methyltransferase superfamily. TrmB family.

It carries out the reaction guanosine(46) in tRNA + S-adenosyl-L-methionine = N(7)-methylguanosine(46) in tRNA + S-adenosyl-L-homocysteine. It functions in the pathway tRNA modification; N(7)-methylguanine-tRNA biosynthesis. Functionally, catalyzes the formation of N(7)-methylguanine at position 46 (m7G46) in tRNA. The sequence is that of tRNA (guanine-N(7)-)-methyltransferase from Rhodopirellula baltica (strain DSM 10527 / NCIMB 13988 / SH1).